The chain runs to 331 residues: Ferredoxin--NADP reductase 2 (331 aa).

FAD contacts are provided by glutamate 37, glutamine 45, tyrosine 50, valine 90, phenylalanine 124, aspartate 286, and threonine 327.

It belongs to the ferredoxin--NADP reductase type 2 family. In terms of assembly, homodimer. FAD serves as cofactor.

The enzyme catalyses 2 reduced [2Fe-2S]-[ferredoxin] + NADP(+) + H(+) = 2 oxidized [2Fe-2S]-[ferredoxin] + NADPH. This is Ferredoxin--NADP reductase 2 from Listeria innocua serovar 6a (strain ATCC BAA-680 / CLIP 11262).